A 342-amino-acid polypeptide reads, in one-letter code: Putative ABC transporter anion-binding protein HVO_1888 (342 aa).

The segment at residues methionine 1 to alanine 32 is a signal peptide (tat-type signal). Residues threonine 24–alanine 37 are compositionally biased toward polar residues. A disordered region spans residues threonine 24–glutamate 52.

In terms of assembly, the complex is composed of two ATP-binding proteins (HVO_1886), two transmembrane proteins (HVO_1887) and a solute-binding protein (HVO_1888). Post-translationally, predicted to be exported by the Tat system. The position of the signal peptide cleavage has not been experimentally proven.

Part of an ABC transporter complex involved in anions import. This chain is Putative ABC transporter anion-binding protein HVO_1888, found in Haloferax volcanii (strain ATCC 29605 / DSM 3757 / JCM 8879 / NBRC 14742 / NCIMB 2012 / VKM B-1768 / DS2) (Halobacterium volcanii).